Consider the following 907-residue polypeptide: Alanine--tRNA ligase (907 aa).

Zn(2+)-binding residues include His602, His606, Cys706, and His710.

It belongs to the class-II aminoacyl-tRNA synthetase family. Requires Zn(2+) as cofactor.

Its subcellular location is the cytoplasm. The enzyme catalyses tRNA(Ala) + L-alanine + ATP = L-alanyl-tRNA(Ala) + AMP + diphosphate. Functionally, catalyzes the attachment of alanine to tRNA(Ala) in a two-step reaction: alanine is first activated by ATP to form Ala-AMP and then transferred to the acceptor end of tRNA(Ala). Also edits incorrectly charged Ser-tRNA(Ala) and Gly-tRNA(Ala) via its editing domain. In Thermofilum pendens (strain DSM 2475 / Hrk 5), this protein is Alanine--tRNA ligase.